The following is a 104-amino-acid chain: Large ribosomal subunit protein bL27 (104 aa).

A propeptide spanning residues 1–15 is cleaved from the precursor; it reads MNNKYFLTKIDLQFF.

It belongs to the bacterial ribosomal protein bL27 family. In terms of processing, the N-terminus is cleaved by ribosomal processing cysteine protease Prp.

In Mycoplasma pneumoniae (strain ATCC 29342 / M129 / Subtype 1) (Mycoplasmoides pneumoniae), this protein is Large ribosomal subunit protein bL27.